Consider the following 384-residue polypeptide: NADP-dependent alcohol dehydrogenase 3 (384 aa).

Belongs to the iron-containing alcohol dehydrogenase family.

It catalyses the reaction a primary alcohol + NADP(+) = an aldehyde + NADPH + H(+). Functionally, has NADP-dependent alcohol dehydrogenase activity. This chain is NADP-dependent alcohol dehydrogenase 3, found in Entamoeba histolytica (strain ATCC 30459 / HM-1:IMSS / ABRM).